A 359-amino-acid polypeptide reads, in one-letter code: 4-hydroxy-3-methylbut-2-en-1-yl diphosphate synthase (flavodoxin) (359 aa).

4 residues coordinate [4Fe-4S] cluster: Cys-264, Cys-267, Cys-299, and Glu-306.

This sequence belongs to the IspG family. Requires [4Fe-4S] cluster as cofactor.

The enzyme catalyses (2E)-4-hydroxy-3-methylbut-2-enyl diphosphate + oxidized [flavodoxin] + H2O + 2 H(+) = 2-C-methyl-D-erythritol 2,4-cyclic diphosphate + reduced [flavodoxin]. Its pathway is isoprenoid biosynthesis; isopentenyl diphosphate biosynthesis via DXP pathway; isopentenyl diphosphate from 1-deoxy-D-xylulose 5-phosphate: step 5/6. Its function is as follows. Converts 2C-methyl-D-erythritol 2,4-cyclodiphosphate (ME-2,4cPP) into 1-hydroxy-2-methyl-2-(E)-butenyl 4-diphosphate. This is 4-hydroxy-3-methylbut-2-en-1-yl diphosphate synthase (flavodoxin) from Helicobacter pylori (strain HPAG1).